The following is a 66-amino-acid chain: Large ribosomal subunit protein uL29 (66 aa).

It belongs to the universal ribosomal protein uL29 family.

The protein is Large ribosomal subunit protein uL29 of Bacillus mycoides (strain KBAB4) (Bacillus weihenstephanensis).